We begin with the raw amino-acid sequence, 172 residues long: 3-hydroxydecanoyl-[acyl-carrier-protein] dehydratase (172 aa).

His-71 is an active-site residue.

This sequence belongs to the thioester dehydratase family. FabA subfamily. In terms of assembly, homodimer.

The protein localises to the cytoplasm. It catalyses the reaction a (3R)-hydroxyacyl-[ACP] = a (2E)-enoyl-[ACP] + H2O. The enzyme catalyses (3R)-hydroxydecanoyl-[ACP] = (2E)-decenoyl-[ACP] + H2O. It carries out the reaction (2E)-decenoyl-[ACP] = (3Z)-decenoyl-[ACP]. Its pathway is lipid metabolism; fatty acid biosynthesis. Its function is as follows. Necessary for the introduction of cis unsaturation into fatty acids. Catalyzes the dehydration of (3R)-3-hydroxydecanoyl-ACP to E-(2)-decenoyl-ACP and then its isomerization to Z-(3)-decenoyl-ACP. Can catalyze the dehydratase reaction for beta-hydroxyacyl-ACPs with saturated chain lengths up to 16:0, being most active on intermediate chain length. This Aliivibrio fischeri (strain ATCC 700601 / ES114) (Vibrio fischeri) protein is 3-hydroxydecanoyl-[acyl-carrier-protein] dehydratase.